The primary structure comprises 257 residues: 1-(5-phosphoribosyl)-5-[(5-phosphoribosylamino)methylideneamino] imidazole-4-carboxamide isomerase (257 aa).

Catalysis depends on Asp-8, which acts as the Proton acceptor. Asp-131 acts as the Proton donor in catalysis.

It belongs to the HisA/HisF family.

Its subcellular location is the cytoplasm. The catalysed reaction is 1-(5-phospho-beta-D-ribosyl)-5-[(5-phospho-beta-D-ribosylamino)methylideneamino]imidazole-4-carboxamide = 5-[(5-phospho-1-deoxy-D-ribulos-1-ylimino)methylamino]-1-(5-phospho-beta-D-ribosyl)imidazole-4-carboxamide. The protein operates within amino-acid biosynthesis; L-histidine biosynthesis; L-histidine from 5-phospho-alpha-D-ribose 1-diphosphate: step 4/9. In Nitrosospira multiformis (strain ATCC 25196 / NCIMB 11849 / C 71), this protein is 1-(5-phosphoribosyl)-5-[(5-phosphoribosylamino)methylideneamino] imidazole-4-carboxamide isomerase.